The sequence spans 349 residues: Insulin gene enhancer protein isl-1 (349 aa).

LIM zinc-binding domains follow at residues 17-70 and 79-133; these read CVGC…CKRD and CAKC…RADH. Positions 181–240 form a DNA-binding region, homeobox; sequence TTRVRTVLNEKQLHTLRTCYNANPRPDALMKEQLVEMTGLSPRVIRVWFQNKRCKDKKRS. The disordered stretch occupies residues 312 to 349; that stretch reads VNFSEGGPGSNSTGSEVASMSSQLPDTPNSMVASPIEA. Residues 321–343 are compositionally biased toward polar residues; sequence SNSTGSEVASMSSQLPDTPNSMV.

Its subcellular location is the nucleus. Its function is as follows. DNA-binding transcriptional activator. Recognizes and binds to the consensus octamer binding site 5'-ATAATTAA-3' in promoter of target genes. Plays a fundamental role in the gene regulatory network essential for retinal ganglion cell (RGC) differentiation. May be involved in subtype specialization of primary motoneurons. May bind to insulin gene enhancer sequences. Essential for heart development. The sequence is that of Insulin gene enhancer protein isl-1 (isl1) from Danio rerio (Zebrafish).